The primary structure comprises 156 residues: uncharacterized protein (156 aa).

The stretch at 43–84 (LKIDENEVKLEISVEKLKNLSRVCENIEQVVDKVVEELRYAL) forms a coiled coil.

This is an uncharacterized protein from Aquifex aeolicus (strain VF5).